A 200-amino-acid chain; its full sequence is Holliday junction resolvase RecU (200 aa).

Residues 1-25 are disordered; it reads MTIRYPNGKRYNQASQPQKTPIKTH. A compositionally biased stretch (polar residues) spans 10–25; that stretch reads RYNQASQPQKTPIKTH. Positions 85, 87, 100, and 119 each coordinate Mg(2+).

It belongs to the RecU family. Mg(2+) serves as cofactor.

It localises to the cytoplasm. It carries out the reaction Endonucleolytic cleavage at a junction such as a reciprocal single-stranded crossover between two homologous DNA duplexes (Holliday junction).. In terms of biological role, endonuclease that resolves Holliday junction intermediates in genetic recombination. Cleaves mobile four-strand junctions by introducing symmetrical nicks in paired strands. Promotes annealing of linear ssDNA with homologous dsDNA. Required for DNA repair, homologous recombination and chromosome segregation. The chain is Holliday junction resolvase RecU from Bacillus cereus (strain B4264).